Here is a 259-residue protein sequence, read N- to C-terminus: GTP cyclohydrolase FolE2 (259 aa).

The protein belongs to the GTP cyclohydrolase IV family.

The catalysed reaction is GTP + H2O = 7,8-dihydroneopterin 3'-triphosphate + formate + H(+). Its pathway is cofactor biosynthesis; 7,8-dihydroneopterin triphosphate biosynthesis; 7,8-dihydroneopterin triphosphate from GTP: step 1/1. In terms of biological role, converts GTP to 7,8-dihydroneopterin triphosphate. The protein is GTP cyclohydrolase FolE2 of Thermotoga neapolitana (strain ATCC 49049 / DSM 4359 / NBRC 107923 / NS-E).